The sequence spans 166 residues: Large ribosomal subunit protein uL11z (166 aa).

The protein belongs to the universal ribosomal protein uL11 family.

Its function is as follows. Binds directly to 26S ribosomal RNA. The polypeptide is Large ribosomal subunit protein uL11z (RPL12A) (Arabidopsis thaliana (Mouse-ear cress)).